The chain runs to 222 residues: N-(5'-phosphoribosyl)anthranilate isomerase (222 aa).

Belongs to the TrpF family.

The enzyme catalyses N-(5-phospho-beta-D-ribosyl)anthranilate = 1-(2-carboxyphenylamino)-1-deoxy-D-ribulose 5-phosphate. Its pathway is amino-acid biosynthesis; L-tryptophan biosynthesis; L-tryptophan from chorismate: step 3/5. The protein is N-(5'-phosphoribosyl)anthranilate isomerase of Rhizobium etli (strain CIAT 652).